We begin with the raw amino-acid sequence, 145 residues long: Prefoldin subunit alpha (145 aa).

This sequence belongs to the prefoldin alpha subunit family. Heterohexamer of two alpha and four beta subunits.

Its subcellular location is the cytoplasm. Its function is as follows. Molecular chaperone capable of stabilizing a range of proteins. Seems to fulfill an ATP-independent, HSP70-like function in archaeal de novo protein folding. The chain is Prefoldin subunit alpha from Nitrosopumilus maritimus (strain SCM1).